Reading from the N-terminus, the 835-residue chain is Cap-specific mRNA (nucleoside-2'-O-)-methyltransferase 1 (835 aa).

The short motif at 2–19 (RRRNDPECTAPIKKQKKR) is the Bipartite nuclear localization signal element. The disordered stretch occupies residues 24–68 (ALNLSAASGDEPPSSVNHAAKASTTSLSGSDSETEGKQHGSDSFD). 5 positions are modified to phosphoserine: Ser-28, Ser-31, Ser-53, Ser-66, and Ser-91. The span at 37 to 54 (SSVNHAAKASTTSLSGSD) shows a compositional bias: polar residues. Basic and acidic residues predominate over residues 57 to 68 (TEGKQHGSDSFD). The G-patch domain occupies 87–133 (YNSVSQKLMAKMGFREGEGLGKYSQGRKDIVEASNQKGRRGLGLTLQ). Residue Lys-108 is modified to N6-acetyllysine. Residues 203–207 (KSVFD) and Arg-218 contribute to the substrate site. The 220-residue stretch at 231–450 (FFLNRAAMKM…ERYVVCKGLK (220 aa)) folds into the RrmJ-type SAM-dependent 2'-O-MTase domain. Residue Asn-234 participates in S-adenosyl-L-methionine binding. Lys-239 is an active-site residue. Residues 277–283 (CAGPGGF) and 335–336 (DI) contribute to the S-adenosyl-L-methionine site. Asp-364 is a catalytic residue. 374-376 (NLQ) lines the substrate pocket. Lys-404 serves as the catalytic Proton acceptor. A substrate-binding site is contributed by Asn-439. The tract at residues 727-835 (SSGTPKLSYT…VLSFIQTHSA (109 aa)) is interaction with POLR2A. In terms of domain architecture, WW spans 752 to 786 (RTVNEPWTMGFSKSFKRKFFYNKKTKISTFDLPAD).

In terms of assembly, interacts with POLR2A (via C-terminus).

The protein localises to the nucleus. The catalysed reaction is a 5'-end (N(7)-methyl 5'-triphosphoguanosine)-ribonucleoside in mRNA + S-adenosyl-L-methionine = a 5'-end (N(7)-methyl 5'-triphosphoguanosine)-(2'-O-methyl-ribonucleoside) in mRNA + S-adenosyl-L-homocysteine + H(+). In terms of biological role, S-adenosyl-L-methionine-dependent methyltransferase that mediates mRNA cap1 2'-O-ribose methylation to the 5'-cap structure of mRNAs. Methylates the ribose of the first nucleotide of a m(7)GpppG-capped mRNA and small nuclear RNA (snRNA) to produce m(7)GpppRm (cap1). Displays a preference for cap0 transcripts. Cap1 modification is linked to higher levels of translation. May be involved in the interferon response pathway. In Ailuropoda melanoleuca (Giant panda), this protein is Cap-specific mRNA (nucleoside-2'-O-)-methyltransferase 1 (CMTR1).